The primary structure comprises 461 residues: Propanal dehydrogenase (CoA-propanoylating) (461 aa).

Residues 1–18 (MNTSELETLIRNILSEQL) are targets protein to the BMC.

This sequence belongs to the EutE/PduP family. Interacts with PduK, probably with its BMC-containing N-terminus. Interacts with shell proteins PduA and PduJ, interacts with PduQ.

It localises to the bacterial microcompartment. It catalyses the reaction propanal + NAD(+) + CoA = propanoyl-CoA + NADH + H(+). The protein operates within polyol metabolism; 1,2-propanediol degradation. In terms of biological role, a CoA-acylating aldehyde dehydrogenase required for optimal 1,2-propanediol (1,2-PD) degradation. Optimizes growth in the bacterial microcompartment (BMC) dedicated to 1,2-PD degradation by minimizing propionaldehyde toxicity. NAD(+) and NADH are regenerated internally within the Pdu BMC by the PduP and PduQ enzymes, which reduce NAD(+) and oxidize NADH respectively, although there must also be cofactor transport across the BMC. Directly targeted to the BMC. Its function is as follows. Expression of a cosmid containing the full 21-gene pdu operon in E.coli allows E.coli to grow on 1,2-propanediol (1,2-PD) with the appearance of bacterial microcompartments (BMC) in its cytoplasm. Functionally, the 1,2-PD-specific bacterial microcompartment (BMC) concentrates low levels of 1,2-PD catabolic enzymes, concentrates volatile reaction intermediates thus enhancing pathway flux and keeps the level of toxic, mutagenic propionaldehyde low. This chain is Propanal dehydrogenase (CoA-propanoylating), found in Citrobacter freundii.